A 554-amino-acid polypeptide reads, in one-letter code: Phosphomethylpyrimidine synthase (554 aa).

Residues asparagine 188, methionine 217, tyrosine 246, histidine 282, 302–304 (SRG), 343–346 (DGLR), and glutamate 382 each bind substrate. Histidine 386 lines the Zn(2+) pocket. Tyrosine 409 provides a ligand contact to substrate. Histidine 450 contributes to the Zn(2+) binding site. 3 residues coordinate [4Fe-4S] cluster: cysteine 530, cysteine 533, and cysteine 538.

It belongs to the ThiC family. As to quaternary structure, homodimer. [4Fe-4S] cluster is required as a cofactor.

The enzyme catalyses 5-amino-1-(5-phospho-beta-D-ribosyl)imidazole + S-adenosyl-L-methionine = 4-amino-2-methyl-5-(phosphooxymethyl)pyrimidine + CO + 5'-deoxyadenosine + formate + L-methionine + 3 H(+). It functions in the pathway cofactor biosynthesis; thiamine diphosphate biosynthesis. Catalyzes the synthesis of the hydroxymethylpyrimidine phosphate (HMP-P) moiety of thiamine from aminoimidazole ribotide (AIR) in a radical S-adenosyl-L-methionine (SAM)-dependent reaction. The chain is Phosphomethylpyrimidine synthase from Coxiella burnetii (strain CbuK_Q154) (Coxiella burnetii (strain Q154)).